An 837-amino-acid chain; its full sequence is Protein translocase subunit SecA (837 aa).

ATP-binding positions include Q83, 101 to 105, and D494; that span reads GEGKT.

The protein belongs to the SecA family. Monomer and homodimer. Part of the essential Sec protein translocation apparatus which comprises SecA, SecYEG and auxiliary proteins SecDF. Other proteins may also be involved.

Its subcellular location is the cell membrane. It is found in the cytoplasm. The enzyme catalyses ATP + H2O + cellular proteinSide 1 = ADP + phosphate + cellular proteinSide 2.. In terms of biological role, part of the Sec protein translocase complex. Interacts with the SecYEG preprotein conducting channel. Has a central role in coupling the hydrolysis of ATP to the transfer of proteins into and across the cell membrane, serving as an ATP-driven molecular motor driving the stepwise translocation of polypeptide chains across the membrane. This Ureaplasma parvum serovar 3 (strain ATCC 27815 / 27 / NCTC 11736) protein is Protein translocase subunit SecA.